We begin with the raw amino-acid sequence, 162 residues long: Putative ankyrin repeat protein RBE_0151 (162 aa).

3 ANK repeats span residues 49–77 (EKWT…NINI), 81–110 (KGRT…VVAP), and 114–145 (YGWS…EHDK).

This chain is Putative ankyrin repeat protein RBE_0151, found in Rickettsia bellii (strain RML369-C).